We begin with the raw amino-acid sequence, 156 residues long: Phospholipase A2 A2-hormotoxin-Apt1a (156 aa).

The N-terminal stretch at 1 to 19 (MQLYTYFFTFSLVLILALA) is a signal peptide. Residues 20–35 (DQENKSLDFTQEGGIA) constitute a propeptide that is removed on maturation. 5 disulfide bridges follow: Cys62–Cys156, Cys64–Cys80, Cys79–Cys138, Cys86–Cys131, and Cys115–Cys129. Positions 65 and 67 each coordinate Ca(2+). The active site involves His83. Asp84 lines the Ca(2+) pocket. Asp132 is a catalytic residue.

Belongs to the phospholipase A2 family. The cofactor is Ca(2+).

The protein resides in the secreted. Its subcellular location is the nematocyst. The catalysed reaction is a 1,2-diacyl-sn-glycero-3-phosphocholine + H2O = a 1-acyl-sn-glycero-3-phosphocholine + a fatty acid + H(+). Functionally, sea anemone phospholipase A2 (PLA2) that may have a role both in defense and in digestion, since its expression and enzymatic activity were found both in the acontia (defensive organs) and tentacles. PLA2 catalyzes the calcium-dependent hydrolysis of the 2-acyl groups in 3-sn-phosphoglycerides. The sequence is that of Phospholipase A2 A2-hormotoxin-Apt1a from Adamsia palliata (Cloak anemone).